The primary structure comprises 193 residues: Ion-translocating oxidoreductase complex subunit A (193 aa).

6 consecutive transmembrane segments (helical) span residues 5–25, 39–59, 63–83, 102–122, 134–154, and 171–191; these read LLLF…FLGL, MGMG…AWLI, ILIP…VIAV, LLGI…VALL, ALYG…FAAI, and AIAL…SGLV.

The protein belongs to the NqrDE/RnfAE family. As to quaternary structure, the complex is composed of six subunits: RsxA, RsxB, RsxC, RsxD, RsxE and RsxG.

Its subcellular location is the cell inner membrane. In terms of biological role, part of a membrane-bound complex that couples electron transfer with translocation of ions across the membrane. Required to maintain the reduced state of SoxR. The chain is Ion-translocating oxidoreductase complex subunit A from Escherichia fergusonii (strain ATCC 35469 / DSM 13698 / CCUG 18766 / IAM 14443 / JCM 21226 / LMG 7866 / NBRC 102419 / NCTC 12128 / CDC 0568-73).